Consider the following 283-residue polypeptide: Bifunctional protein FolD (283 aa).

NADP(+) is bound by residues 164–166 (GRS), Ser-189, and Ile-230.

The protein belongs to the tetrahydrofolate dehydrogenase/cyclohydrolase family. Homodimer.

The catalysed reaction is (6R)-5,10-methylene-5,6,7,8-tetrahydrofolate + NADP(+) = (6R)-5,10-methenyltetrahydrofolate + NADPH. The enzyme catalyses (6R)-5,10-methenyltetrahydrofolate + H2O = (6R)-10-formyltetrahydrofolate + H(+). It functions in the pathway one-carbon metabolism; tetrahydrofolate interconversion. Functionally, catalyzes the oxidation of 5,10-methylenetetrahydrofolate to 5,10-methenyltetrahydrofolate and then the hydrolysis of 5,10-methenyltetrahydrofolate to 10-formyltetrahydrofolate. In Lactobacillus delbrueckii subsp. bulgaricus (strain ATCC 11842 / DSM 20081 / BCRC 10696 / JCM 1002 / NBRC 13953 / NCIMB 11778 / NCTC 12712 / WDCM 00102 / Lb 14), this protein is Bifunctional protein FolD.